Here is a 283-residue protein sequence, read N- to C-terminus: tRNA (guanine-N(1)-)-methyltransferase (283 aa).

S-adenosyl-L-methionine contacts are provided by residues G113 and 133 to 138 (IGDYVL).

This sequence belongs to the RNA methyltransferase TrmD family. In terms of assembly, homodimer.

It is found in the cytoplasm. It carries out the reaction guanosine(37) in tRNA + S-adenosyl-L-methionine = N(1)-methylguanosine(37) in tRNA + S-adenosyl-L-homocysteine + H(+). Specifically methylates guanosine-37 in various tRNAs. This Parafrankia sp. (strain EAN1pec) protein is tRNA (guanine-N(1)-)-methyltransferase.